Consider the following 145-residue polypeptide: Large ribosomal subunit protein uL16 (145 aa).

A compositionally biased stretch (basic residues) spans 1 to 21; it reads MLVPTRVKHRKQHRGRMHGKA. Residues 1–22 are disordered; that stretch reads MLVPTRVKHRKQHRGRMHGKAT.

The protein belongs to the universal ribosomal protein uL16 family. As to quaternary structure, part of the 50S ribosomal subunit.

In terms of biological role, binds 23S rRNA and is also seen to make contacts with the A and possibly P site tRNAs. The chain is Large ribosomal subunit protein uL16 from Desulfitobacterium hafniense (strain Y51).